The sequence spans 215 residues: Probable transaldolase (215 aa).

Lys83 (schiff-base intermediate with substrate) is an active-site residue.

This sequence belongs to the transaldolase family. Type 3B subfamily.

It localises to the cytoplasm. The enzyme catalyses D-sedoheptulose 7-phosphate + D-glyceraldehyde 3-phosphate = D-erythrose 4-phosphate + beta-D-fructose 6-phosphate. It participates in carbohydrate degradation; pentose phosphate pathway; D-glyceraldehyde 3-phosphate and beta-D-fructose 6-phosphate from D-ribose 5-phosphate and D-xylulose 5-phosphate (non-oxidative stage): step 2/3. In terms of biological role, transaldolase is important for the balance of metabolites in the pentose-phosphate pathway. The chain is Probable transaldolase from Methanococcus maripaludis (strain C6 / ATCC BAA-1332).